Reading from the N-terminus, the 1486-residue chain is Chromosome partition protein MukB (1486 aa).

Gly34–Ser41 contacts ATP. Coiled coils occupy residues Leu326–Gln418, Leu444–Gln480, and Arg509–Val603. The interval Pro666–Arg783 is flexible hinge. Coiled-coil stretches lie at residues Glu835 to Glu923, Glu977 to Ala1115, and Val1209 to Ser1266.

This sequence belongs to the SMC family. MukB subfamily. Homodimerization via its hinge domain. Binds to DNA via its C-terminal region. Interacts, and probably forms a ternary complex, with MukE and MukF via its C-terminal region. The complex formation is stimulated by calcium or magnesium. Interacts with tubulin-related protein FtsZ.

The protein localises to the cytoplasm. It localises to the nucleoid. Functionally, plays a central role in chromosome condensation, segregation and cell cycle progression. Functions as a homodimer, which is essential for chromosome partition. Involved in negative DNA supercoiling in vivo, and by this means organize and compact chromosomes. May achieve or facilitate chromosome segregation by condensation DNA from both sides of a centrally located replisome during cell division. This chain is Chromosome partition protein MukB, found in Escherichia fergusonii (strain ATCC 35469 / DSM 13698 / CCUG 18766 / IAM 14443 / JCM 21226 / LMG 7866 / NBRC 102419 / NCTC 12128 / CDC 0568-73).